Here is a 555-residue protein sequence, read N- to C-terminus: Hydroxylamine reductase (555 aa).

[4Fe-4S] cluster is bound by residues Cys3, Cys6, Cys18, and Cys25. Hybrid [4Fe-2O-2S] cluster-binding residues include His252, Glu276, Cys320, Cys407, Cys435, Cys460, Glu494, and Lys496. Cys407 is subject to Cysteine persulfide.

The protein belongs to the HCP family. [4Fe-4S] cluster is required as a cofactor. Requires hybrid [4Fe-2O-2S] cluster as cofactor.

It is found in the cytoplasm. It carries out the reaction A + NH4(+) + H2O = hydroxylamine + AH2 + H(+). Functionally, catalyzes the reduction of hydroxylamine to form NH(3) and H(2)O. This Burkholderia lata (strain ATCC 17760 / DSM 23089 / LMG 22485 / NCIMB 9086 / R18194 / 383) protein is Hydroxylamine reductase.